The sequence spans 426 residues: Enolase (426 aa).

Gln-163 is a binding site for (2R)-2-phosphoglycerate. Glu-205 acts as the Proton donor in catalysis. Mg(2+)-binding residues include Asp-242, Glu-286, and Asp-313. (2R)-2-phosphoglycerate is bound by residues Lys-338, Arg-367, Ser-368, and Lys-389. Lys-338 acts as the Proton acceptor in catalysis.

The protein belongs to the enolase family. The cofactor is Mg(2+).

The protein localises to the cytoplasm. It is found in the secreted. Its subcellular location is the cell surface. It carries out the reaction (2R)-2-phosphoglycerate = phosphoenolpyruvate + H2O. It functions in the pathway carbohydrate degradation; glycolysis; pyruvate from D-glyceraldehyde 3-phosphate: step 4/5. Functionally, catalyzes the reversible conversion of 2-phosphoglycerate (2-PG) into phosphoenolpyruvate (PEP). It is essential for the degradation of carbohydrates via glycolysis. The chain is Enolase from Helicobacter acinonychis (strain Sheeba).